Consider the following 251-residue polypeptide: Zwei Ig domain protein zig-3 (251 aa).

A signal peptide spans methionine 1–serine 19. 2 Ig-like C2-type domains span residues proline 42–serine 144 and proline 160–tyrosine 244. 2 cysteine pairs are disulfide-bonded: cysteine 65–cysteine 128 and cysteine 181–cysteine 228.

Expressed in PVT, AIM and ASI neurons, in vulva and weakly in body wall muscles.

Its subcellular location is the secreted. Functionally, required for maintaining axon position of PVQ and PVP neurons postembryonically in the ventral nerve cord (VNC) by preventing axons drifting into the opposite side of the VNC that could occur during body growth and movement. The sequence is that of Zwei Ig domain protein zig-3 from Caenorhabditis elegans.